We begin with the raw amino-acid sequence, 365 residues long: MAVMAPRTLVLLLSGALALTQTWAGSHSMRYFYTSVSRPGRGEPRFIAVGYVDDTQFVRFDSDAASQRMEPRAPWIEQEEPEYWDGETRNMKARSQTDRVDLGTLRGYYNQSEDGSHTIQRMYGCDVGSDGRFLRGYQQDAYDGKDYIALNEDLRSWTAADMAAQITQRKWEAAHEAEQLRAYLEGTCVEWLRRYLENGKETLQLTDAPKTHMTHHPVSDHEAILRCWALSFYPAEITLTWQRDGEDQTQDTELVETRPAGDGTFQKWAAVVVPSGQEQRYTCHVQHEGLPKPLTLRWEPSSQPTIPIVGIIAGLVLFGAVIAGAVVAAVRWRRKSSDRKGGSYSQAASSDSAQGSDVSLTACKV.

Residues M1 to A24 form the signal peptide. The segment at G25 to D114 is alpha-1. The Extracellular portion of the chain corresponds to G25 to I308. A glycan (N-linked (GlcNAc...) asparagine) is linked at N110. Residues G115 to T206 form an alpha-2 region. Intrachain disulfides connect C125–C188 and C227–C283. The interval D207–W298 is alpha-3. Residues P209–T295 form the Ig-like C1-type domain. The tract at residues E299–I308 is connecting peptide. The helical transmembrane segment at V309 to W332 threads the bilayer. Residues R333–V365 are Cytoplasmic-facing. The interval D338 to V365 is disordered. The span at G342–S359 shows a compositional bias: low complexity. Phosphoserine is present on S343. Y344 carries the post-translational modification Phosphotyrosine. Residues S345, S349, S350, S352, S356, and S359 each carry the phosphoserine modification.

It belongs to the MHC class I family. As to quaternary structure, heterodimer of an alpha chain and a beta chain (beta-2-microglobulin).

Its subcellular location is the membrane. Involved in the presentation of foreign antigens to the immune system. The polypeptide is Class I histocompatibility antigen, Gogo-A*0401 alpha chain (Gorilla gorilla gorilla (Western lowland gorilla)).